A 490-amino-acid chain; its full sequence is GTPase Der (490 aa).

EngA-type G domains follow at residues Pro3 to Ile166 and Ile203 to Thr376. Residues Gly9–Ser16, Asp56–Ile60, Asn118–Asp121, Gly209–Ser216, Asp256–Val260, and Asn321–Asp324 contribute to the GTP site. The KH-like domain maps to Arg377 to Glu461.

Belongs to the TRAFAC class TrmE-Era-EngA-EngB-Septin-like GTPase superfamily. EngA (Der) GTPase family. Associates with the 50S ribosomal subunit.

Its function is as follows. GTPase that plays an essential role in the late steps of ribosome biogenesis. This Enterobacter sp. (strain 638) protein is GTPase Der.